A 303-amino-acid polypeptide reads, in one-letter code: Acetylxylan esterase A (303 aa).

A signal peptide spans 1 to 23; the sequence is MLSTHLLFLATTLLTSLFHPIAA. Catalysis depends on Ser147, which acts as the Charge relay system. The N-linked (GlcNAc...) asparagine glycan is linked to Asn189.

It belongs to the carbohydrate esterase 1 (CE1) family. AxeA subfamily. As to quaternary structure, monomer. In terms of processing, glycosylated.

Its subcellular location is the secreted. It carries out the reaction Deacetylation of xylans and xylo-oligosaccharides.. It participates in glycan degradation; xylan degradation. Acetylxylan esterase involved in the hydrolysis of xylan, a major structural heterogeneous polysaccharide found in plant biomass representing the second most abundant polysaccharide in the biosphere, after cellulose. Degrades acetylated xylans by cleaving acetyl side groups from the hetero-xylan backbone. This Aspergillus ficuum protein is Acetylxylan esterase A (axeA).